Consider the following 1088-residue polypeptide: Myocardin-related transcription factor B (1088 aa).

A Phosphoserine modification is found at Glu-22. The stretch at 40-65 is one RPEL 1 repeat; the sequence is EVLQLRLQQRRTREQLVDQGIMPPLK. Residue Ser-66 is modified to Phosphoserine. RPEL repeat units follow at residues 84-109 and 128-153; these read NFLKHKIRSRPDRSELVRMHILEETF and DDLNEKIAQRPGPMELVEKNILPVDS. Disordered stretches follow at residues 165 to 310, 349 to 389, 472 to 508, and 528 to 553; these read EDYP…NEPQ, KPLN…PSSL, AELPPTGTSNATRVENVHSPLPISPSPSEQSSLSTDD, and LSSSPLRMTNNEDSLSPTSSTLSNLE. Low complexity predominate over residues 197–213; sequence SAASPSEPKVSESPSPV. Residues 214–226 are compositionally biased toward polar residues; the sequence is TTNTPAQFASVSP. Over residues 238–248 the composition is skewed to pro residues; sequence ADQPPPRPAAP. Basic and acidic residues predominate over residues 272–287; it reads NPNDKHRSKKCKDPKP. Residues 355 to 366 show a composition bias toward low complexity; it reads NSNSGNSALNNA. Thr-367 and Thr-370 each carry phosphothreonine. A compositionally biased stretch (polar residues) spans 367–378; the sequence is TPNTPRQNTSTP. The SAP domain occupies 389 to 423; sequence LDDLKVSELKTELKLRGLPVSGTKPDLIERLKPYQ. Residues 528 to 540 show a composition bias toward polar residues; it reads LSSSPLRMTNNED. Ser-541 and Ser-543 each carry phosphoserine. Residues 541–550 are compositionally biased toward low complexity; the sequence is SLSPTSSTLS. Positions 545–601 form a coiled coil; sequence TSSTLSNLELDAAEKDRKLQEKEKQIEELKRKLEQEQKLVEVLKMQLEVEKRGQQQR. Residues 563-591 form a required for interaction with itself and with MRTFA region; it reads LQEKEKQIEELKRKLEQEQKLVEVLKMQL. Disordered stretches follow at residues 595 to 655 and 829 to 886; these read KRGQ…QPVS and NAPL…STQA. A Glycyl lysine isopeptide (Lys-Gly) (interchain with G-Cter in SUMO1) cross-link involves residue Lys-628. The segment covering 829–838 has biased composition (polar residues); sequence NAPLPSLQNG. Basic and acidic residues predominate over residues 867 to 879; it reads KTKDPPRYEEAIK. Ser-921 carries the phosphoserine modification.

As to quaternary structure, interacts with MRTFA and SRF. O-glycosylated.

It is found in the nucleus. Its function is as follows. Acts as a transcriptional coactivator of serum response factor (SRF). Required for skeletal myogenic differentiation. In Homo sapiens (Human), this protein is Myocardin-related transcription factor B.